The sequence spans 472 residues: Glutamate--tRNA ligase (472 aa).

Positions 9-19 (PSPTGPLHIGS) match the 'HIGH' region motif. Positions 237-241 (KLSKR) match the 'KMSKS' region motif. An ATP-binding site is contributed by lysine 240.

This sequence belongs to the class-I aminoacyl-tRNA synthetase family. Glutamate--tRNA ligase type 1 subfamily. Monomer.

It localises to the cytoplasm. The catalysed reaction is tRNA(Glu) + L-glutamate + ATP = L-glutamyl-tRNA(Glu) + AMP + diphosphate. Functionally, catalyzes the attachment of glutamate to tRNA(Glu) in a two-step reaction: glutamate is first activated by ATP to form Glu-AMP and then transferred to the acceptor end of tRNA(Glu). This is Glutamate--tRNA ligase from Buchnera aphidicola subsp. Baizongia pistaciae (strain Bp).